The chain runs to 568 residues: PWWP domain-containing protein2 (568 aa).

Positions 1 to 19 (MTEIKDSSVKDENPGKQEE) are enriched in basic and acidic residues. Disordered stretches follow at residues 1 to 126 (MTEI…YKPG), 213 to 340 (QSTP…DVAK), and 465 to 568 (IASL…TGQK). Positions 29–46 (MSTATNNSKNIETTSSNG) are enriched in polar residues. 2 stretches are compositionally biased toward basic and acidic residues: residues 48–88 (EDIK…KTIE) and 100–122 (KSQK…ERVN). Residues 125–189 (PGMRVLTKMS…SDSLTPLTSE (65 aa)) enclose the PWWP domain. Positions 214-228 (STPDLDSLSVPSSES) are enriched in low complexity. Residues 229 to 249 (EVSEEESDQEMSEPSPIEEDY) show a composition bias toward acidic residues. Over residues 255–266 (RRITRKGTKKKT) the composition is skewed to basic residues. The span at 281–292 (LNASSNVSSNPA) shows a compositional bias: polar residues. Over residues 325 to 336 (KEEEEGSVANEE) the composition is skewed to acidic residues. Composition is skewed to basic and acidic residues over residues 489–500 (KQNEDNEDKVKA) and 514–541 (DASK…KDFA).

The protein is PWWP domain-containing protein2 (pdp2) of Schizosaccharomyces pombe (strain 972 / ATCC 24843) (Fission yeast).